Here is a 424-residue protein sequence, read N- to C-terminus: UDP-N-acetylglucosamine 1-carboxyvinyltransferase (424 aa).

22–23 (KN) serves as a coordination point for phosphoenolpyruvate. Arginine 98 provides a ligand contact to UDP-N-acetyl-alpha-D-glucosamine. Catalysis depends on cysteine 122, which acts as the Proton donor. The residue at position 122 (cysteine 122) is a 2-(S-cysteinyl)pyruvic acid O-phosphothioketal. Residues 127 to 131 (RPVDQ), aspartate 312, and isoleucine 334 each bind UDP-N-acetyl-alpha-D-glucosamine.

Belongs to the EPSP synthase family. MurA subfamily.

The protein resides in the cytoplasm. The catalysed reaction is phosphoenolpyruvate + UDP-N-acetyl-alpha-D-glucosamine = UDP-N-acetyl-3-O-(1-carboxyvinyl)-alpha-D-glucosamine + phosphate. It participates in cell wall biogenesis; peptidoglycan biosynthesis. Cell wall formation. Adds enolpyruvyl to UDP-N-acetylglucosamine. This is UDP-N-acetylglucosamine 1-carboxyvinyltransferase from Xanthomonas oryzae pv. oryzae (strain MAFF 311018).